The sequence spans 491 residues: Probable protein phosphatase 2C 52 (491 aa).

Basic and acidic residues predominate over residues 1–11 (MVYDGAVKDQE). Positions 1 to 211 (MVYDGAVKDQ…REREKERERV (211 aa)) are disordered. The segment covering 12 to 54 (SSANPASASAALSEASAAASEVTAAAAAGAGAGAAEEGAAVSG) has biased composition (low complexity). Residues 66 to 78 (GVRHPLKHRRFRA) show a composition bias toward basic residues. The span at 95–105 (VADEEASEVEQ) shows a compositional bias: acidic residues. The span at 187–211 (VEEKKHKDQENKHKEREREKERERV) shows a compositional bias: basic and acidic residues. Residues 229 to 475 (SCGYSSFRGK…DNITCIVVKF (247 aa)) enclose the PPM-type phosphatase domain. Residues aspartate 265, glycine 266, aspartate 427, and aspartate 466 each contribute to the Mn(2+) site.

It belongs to the PP2C family. The cofactor is Mg(2+). It depends on Mn(2+) as a cofactor.

It carries out the reaction O-phospho-L-seryl-[protein] + H2O = L-seryl-[protein] + phosphate. The enzyme catalyses O-phospho-L-threonyl-[protein] + H2O = L-threonyl-[protein] + phosphate. The polypeptide is Probable protein phosphatase 2C 52 (Oryza sativa subsp. japonica (Rice)).